The following is an 871-amino-acid chain: Probable receptor-like protein kinase At2g21480 (871 aa).

Positions 1-39 (MEIRKKPNIPMCLVLDSSSRPFMTLLFTILLFLTGLASA) are cleaved as a signal peptide. At 40–439 (VGAVGGSPTA…GQRASMGKQG (400 aa)) the chain is on the extracellular side. Asparagine 169, asparagine 182, asparagine 253, asparagine 316, and asparagine 381 each carry an N-linked (GlcNAc...) asparagine glycan. The chain crosses the membrane as a helical span at residues 440 to 460 (MVATAGFVMMFGAFVGLGAMV). Residues 461–871 (YKWKKRPQDW…FTQFASLNGR (411 aa)) are Cytoplasmic-facing. The Protein kinase domain maps to 525–797 (FDASEIIGVG…GDVLWNLEYA (273 aa)). ATP is bound by residues 531–539 (IGVGGFGNV) and lysine 553. The active-site Proton acceptor is aspartate 649. The disordered stretch occupies residues 808–871 (KAEAEEVETP…FTQFASLNGR (64 aa)). Over residues 817-839 (PKPVAVPAAAPTSPAATTAAASE) the composition is skewed to low complexity. A compositionally biased stretch (polar residues) spans 854–871 (DQHSGTTMFTQFASLNGR).

This sequence belongs to the protein kinase superfamily. Ser/Thr protein kinase family.

The protein localises to the membrane. This Arabidopsis thaliana (Mouse-ear cress) protein is Probable receptor-like protein kinase At2g21480.